A 754-amino-acid chain; its full sequence is 5-methyltetrahydropteroyltriglutamate--homocysteine methyltransferase (754 aa).

5-methyltetrahydropteroyltri-L-glutamate is bound by residues 17 to 20 and Lys-110; that span reads RELK. L-homocysteine is bound by residues 421–423 and Glu-474; that span reads IGS. L-methionine contacts are provided by residues 421–423 and Glu-474; that span reads IGS. 5-methyltetrahydropteroyltri-L-glutamate-binding positions include 505–506 and Trp-551; that span reads RC. Asp-589 contacts L-homocysteine. Asp-589 contributes to the L-methionine binding site. Position 595 (Glu-595) interacts with 5-methyltetrahydropteroyltri-L-glutamate. His-631, Cys-633, and Glu-655 together coordinate Zn(2+). Residue His-684 is the Proton donor of the active site. Cys-716 is a Zn(2+) binding site.

The protein belongs to the vitamin-B12 independent methionine synthase family. Zn(2+) is required as a cofactor.

The enzyme catalyses 5-methyltetrahydropteroyltri-L-glutamate + L-homocysteine = tetrahydropteroyltri-L-glutamate + L-methionine. It participates in amino-acid biosynthesis; L-methionine biosynthesis via de novo pathway; L-methionine from L-homocysteine (MetE route): step 1/1. In terms of biological role, catalyzes the transfer of a methyl group from 5-methyltetrahydrofolate to homocysteine resulting in methionine formation. This chain is 5-methyltetrahydropteroyltriglutamate--homocysteine methyltransferase, found in Synechococcus sp. (strain JA-2-3B'a(2-13)) (Cyanobacteria bacterium Yellowstone B-Prime).